A 137-amino-acid chain; its full sequence is NADPH-dependent 7-cyano-7-deazaguanine reductase (137 aa).

The active-site Thioimide intermediate is the Cys-51. The Proton donor role is filled by Asp-58. Residues 73-75 (VEL) and 92-93 (HE) each bind substrate.

It belongs to the GTP cyclohydrolase I family. QueF type 1 subfamily.

The protein localises to the cytoplasm. It carries out the reaction 7-aminomethyl-7-carbaguanine + 2 NADP(+) = 7-cyano-7-deazaguanine + 2 NADPH + 3 H(+). It participates in tRNA modification; tRNA-queuosine biosynthesis. Its function is as follows. Catalyzes the NADPH-dependent reduction of 7-cyano-7-deazaguanine (preQ0) to 7-aminomethyl-7-deazaguanine (preQ1). The sequence is that of NADPH-dependent 7-cyano-7-deazaguanine reductase from Gloeobacter violaceus (strain ATCC 29082 / PCC 7421).